Reading from the N-terminus, the 289-residue chain is Glyceraldehyde-3-phosphate dehydrogenase (289 aa).

Asp12 and Arg57 together coordinate NAD(+). D-glyceraldehyde 3-phosphate contacts are provided by residues 128 to 130 (SCT), Thr159, 188 to 189 (TG), and Arg211. The active-site Nucleophile is the Cys129.

The protein belongs to the glyceraldehyde-3-phosphate dehydrogenase family. In terms of assembly, homotetramer.

Its subcellular location is the cytoplasm. The enzyme catalyses D-glyceraldehyde 3-phosphate + phosphate + NAD(+) = (2R)-3-phospho-glyceroyl phosphate + NADH + H(+). Its pathway is carbohydrate degradation; glycolysis; pyruvate from D-glyceraldehyde 3-phosphate: step 1/5. This is Glyceraldehyde-3-phosphate dehydrogenase (GPD) from Amanita muscaria (Fly agaric).